A 380-amino-acid chain; its full sequence is Chaperone protein DnaJ (380 aa).

The tract at residues M1–K48 is disordered. The region spanning D5–G72 is the J domain. Positions A24–P34 are enriched in basic residues. Residues D35–K48 show a composition bias toward basic and acidic residues. The segment at G139–N217 adopts a CR-type zinc-finger fold. Residues C152, C155, C169, C172, C191, C194, C205, and C208 each coordinate Zn(2+). 4 CXXCXGXG motif repeats span residues C152–G159, C169–G176, C191–G198, and C205–G212. The disordered stretch occupies residues K357–A380. Basic and acidic residues predominate over residues S364 to A380.

The protein belongs to the DnaJ family. In terms of assembly, homodimer. Zn(2+) is required as a cofactor.

The protein resides in the cytoplasm. Its function is as follows. Participates actively in the response to hyperosmotic and heat shock by preventing the aggregation of stress-denatured proteins and by disaggregating proteins, also in an autonomous, DnaK-independent fashion. Unfolded proteins bind initially to DnaJ; upon interaction with the DnaJ-bound protein, DnaK hydrolyzes its bound ATP, resulting in the formation of a stable complex. GrpE releases ADP from DnaK; ATP binding to DnaK triggers the release of the substrate protein, thus completing the reaction cycle. Several rounds of ATP-dependent interactions between DnaJ, DnaK and GrpE are required for fully efficient folding. Also involved, together with DnaK and GrpE, in the DNA replication of plasmids through activation of initiation proteins. This is Chaperone protein DnaJ from Polaromonas sp. (strain JS666 / ATCC BAA-500).